We begin with the raw amino-acid sequence, 422 residues long: Serine--tRNA ligase (422 aa).

An L-serine-binding site is contributed by 230 to 232 (TAE). 261-263 (RAE) is a binding site for ATP. Glu-284 is a binding site for L-serine. 348 to 351 (EISS) is an ATP binding site. Position 383 (Ser-383) interacts with L-serine.

Belongs to the class-II aminoacyl-tRNA synthetase family. Type-1 seryl-tRNA synthetase subfamily. Homodimer. The tRNA molecule binds across the dimer.

It localises to the cytoplasm. The enzyme catalyses tRNA(Ser) + L-serine + ATP = L-seryl-tRNA(Ser) + AMP + diphosphate + H(+). It catalyses the reaction tRNA(Sec) + L-serine + ATP = L-seryl-tRNA(Sec) + AMP + diphosphate + H(+). It participates in aminoacyl-tRNA biosynthesis; selenocysteinyl-tRNA(Sec) biosynthesis; L-seryl-tRNA(Sec) from L-serine and tRNA(Sec): step 1/1. Catalyzes the attachment of serine to tRNA(Ser). Is also able to aminoacylate tRNA(Sec) with serine, to form the misacylated tRNA L-seryl-tRNA(Sec), which will be further converted into selenocysteinyl-tRNA(Sec). The polypeptide is Serine--tRNA ligase (Pelotomaculum thermopropionicum (strain DSM 13744 / JCM 10971 / SI)).